We begin with the raw amino-acid sequence, 429 residues long: Glutamate-1-semialdehyde 2,1-aminomutase (429 aa).

Lysine 267 bears the N6-(pyridoxal phosphate)lysine mark.

This sequence belongs to the class-III pyridoxal-phosphate-dependent aminotransferase family. HemL subfamily. Homodimer. The cofactor is pyridoxal 5'-phosphate.

The protein localises to the cytoplasm. It carries out the reaction (S)-4-amino-5-oxopentanoate = 5-aminolevulinate. The protein operates within porphyrin-containing compound metabolism; protoporphyrin-IX biosynthesis; 5-aminolevulinate from L-glutamyl-tRNA(Glu): step 2/2. The protein is Glutamate-1-semialdehyde 2,1-aminomutase of Xanthomonas oryzae pv. oryzae (strain PXO99A).